The following is a 66-amino-acid chain: RTCLISPSSTSQTCPKGQDICFTKAFCDRWCSSRGPVIEQGCAATCPEFTSRYKSLLCCTTDNCNH.

Intrachain disulfides connect C3-C21, C14-C42, C27-C31, C46-C58, and C59-C64.

It belongs to the three-finger toxin family. Long-chain subfamily. Kappa-neurotoxin sub-subfamily. Homo- and heterodimer; non-covalently linked. Expressed by the venom gland.

It is found in the secreted. In terms of biological role, postsynaptic neurotoxin that binds and inhibits neuronal nicotinic acetylcholine receptors (nAChR) with high affinity (IC(50)&lt;100 nM). Is a selective, and slowly reversible antagonist of alpha-3/CHRNA3-containing and some alpha-4/CHRNA4-containing AChRs. This Bungarus flaviceps flaviceps (Red-headed krait) protein is Kappa-flavitoxin.